Consider the following 248-residue polypeptide: Probable transcriptional regulatory protein Nwi_2729 (248 aa).

The tract at residues 1-21 (MAGHSQFKNIMHRKGRQDAQK) is disordered.

This sequence belongs to the TACO1 family.

It is found in the cytoplasm. The sequence is that of Probable transcriptional regulatory protein Nwi_2729 from Nitrobacter winogradskyi (strain ATCC 25391 / DSM 10237 / CIP 104748 / NCIMB 11846 / Nb-255).